A 658-amino-acid chain; its full sequence is Vertnin (658 aa).

Belongs to the vertnin family.

The protein resides in the nucleus. Acts as a transcription factor that regulates development of thoracic vertebrae. The sequence is that of Vertnin (VRTN) from Bos taurus (Bovine).